The primary structure comprises 927 residues: Protein unc-45 homolog B (927 aa).

3 TPR repeats span residues 4 to 37 (PVQL…ITDK), 41 to 74 (AVLY…DASD), and 76 to 108 (KALF…EPKN). 3 ARM repeats span residues 167-206 (DAGA…GMCT), 209-248 (RARA…NIVD), and 746-785 (DKLR…NLAL).

Detected initially throughout the somites and the heart and gradually also expressed in the jaw, branchial arches and body wall muscles at later embryonic stages.

The protein localises to the cytoplasm. It localises to the myofibril. Its subcellular location is the sarcomere. The protein resides in the z line. It is found in the a band. The protein localises to the perinuclear region. It localises to the cytosol. Acts as a co-chaperone for HSP90 and is required for proper folding of the myosin motor domain. Plays a role in sarcomere formation during muscle cell development. Is necessary for normal early lens development. The protein is Protein unc-45 homolog B of Xenopus tropicalis (Western clawed frog).